The sequence spans 305 residues: MIIDVNTPISSRLDKYLKRLYPLLTQGVIEKALRQKQITVNSQKAEASLRVKGGDKIFINDKFNLPVKQPEKLVFTDAEIKLAKKITTDYLIYEDDNLIAINKPAGLATQGGSKINLSIDSALKYLNYKGADFKLVHRLDKETSGLLLIAKNYLSNVKLHDAFKEKLVVKTYFAVTYGKPIKNVGEVRSNIEKSKGSTPKITDIYSENGKLAITYYKLLKSLDNNLFLIEFTPVTGRMHQLRLHAKLLGCPIVGDDKYGNKEIMPYSKYMFLHANNICLSEKIFGKEINLEAKLPFYFTDKFVEC.

The 60-residue stretch at 11-70 folds into the S4 RNA-binding domain; sequence SRLDKYLKRLYPLLTQGVIEKALRQKQITVNSQKAEASLRVKGGDKIFINDKFNLPVKQP. Asp-140 is an active-site residue.

The protein belongs to the pseudouridine synthase RluA family.

The enzyme catalyses uridine(955/2504/2580) in 23S rRNA = pseudouridine(955/2504/2580) in 23S rRNA. Responsible for synthesis of pseudouridine from uracil at positions 955, 2504 and 2580 in 23S ribosomal RNA. The sequence is that of Ribosomal large subunit pseudouridine synthase C (rluC) from Rickettsia felis (strain ATCC VR-1525 / URRWXCal2) (Rickettsia azadi).